The following is a 671-amino-acid chain: Amidase chry2 (671 aa).

C2 acts as the Nucleophile in catalysis. A Glutamine amidotransferase type-2 domain is found at 2-220; sequence CGISAFITHP…PGHYLICRPN (219 aa). One can recognise an Asparagine synthetase domain in the interval 251–639; sequence VRERLLEAVR…TQDAMDGAFN (389 aa).

The protein belongs to the asparagine synthetase family.

The protein operates within pigment biosynthesis. Functionally, amidase; part of the gene cluster that mediates the biosynthesis of the yellow pigment chrysogine. Pyruvic acid and anthranilic acid are likely substrates for the nonribosomal peptide synthetase chry1/NRPS14, with pyruvic acid adenylated by the first A domain and anthranilic acid by the second. If pyruvic acid and anthranilic acid are merged and released from chry1/NRPS14 by hydrolysis, a subsequent amidation would lead to 2-pyruvoylaminobenzamide. This process is probably catalyzed by the amidotransferase chry2 using glutamine as amino donor. The dehydrogenase chry5 that has a terminal berberine bridge domain for C-N cyclization could catalyze the cyclization of 2-pyruvoylaminobenzamide to yield acetyl-4(3H)-quinazolidinone. A final reduction of acetyl-4(3H)-quinazolidinone catalyzed by the oxidoreductase chry4 would result in chrysogine. The sequence is that of Amidase chry2 from Gibberella zeae (strain ATCC MYA-4620 / CBS 123657 / FGSC 9075 / NRRL 31084 / PH-1) (Wheat head blight fungus).